A 140-amino-acid polypeptide reads, in one-letter code: Nucleoside diphosphate kinase (140 aa).

ATP is bound by residues Lys-11, Phe-59, Arg-87, Thr-93, Arg-104, and Asn-114. His-117 functions as the Pros-phosphohistidine intermediate in the catalytic mechanism.

Belongs to the NDK family. In terms of assembly, homotetramer. The cofactor is Mg(2+).

The protein resides in the cytoplasm. The catalysed reaction is a 2'-deoxyribonucleoside 5'-diphosphate + ATP = a 2'-deoxyribonucleoside 5'-triphosphate + ADP. It catalyses the reaction a ribonucleoside 5'-diphosphate + ATP = a ribonucleoside 5'-triphosphate + ADP. Its function is as follows. Major role in the synthesis of nucleoside triphosphates other than ATP. The ATP gamma phosphate is transferred to the NDP beta phosphate via a ping-pong mechanism, using a phosphorylated active-site intermediate. The chain is Nucleoside diphosphate kinase from Jannaschia sp. (strain CCS1).